Consider the following 319-residue polypeptide: Tetrahydromethanopterin S-methyltransferase subunit H (319 aa).

The protein belongs to the MtrH family. In terms of assembly, the complex is composed of 8 subunits; MtrA, MtrB, MtrC, MtrD, MtrE, MtrF, MtrG and MtrH.

The enzyme catalyses 5-methyl-5,6,7,8-tetrahydromethanopterin + coenzyme M + 2 Na(+)(in) = 5,6,7,8-tetrahydromethanopterin + methyl-coenzyme M + 2 Na(+)(out). Its pathway is one-carbon metabolism; methanogenesis from CO(2); methyl-coenzyme M from 5,10-methylene-5,6,7,8-tetrahydromethanopterin: step 2/2. Its function is as follows. Part of a complex that catalyzes the formation of methyl-coenzyme M and tetrahydromethanopterin from coenzyme M and methyl-tetrahydromethanopterin. This is an energy-conserving, sodium-ion translocating step. MtrH catalyzes the transfer of the methyl group from methyl-tetrahydromethanopterin to the corrinoid prosthetic group of MtrA. The polypeptide is Tetrahydromethanopterin S-methyltransferase subunit H (Methanococcus maripaludis (strain DSM 14266 / JCM 13030 / NBRC 101832 / S2 / LL)).